The primary structure comprises 1298 residues: DNA-directed RNA polymerase subunit beta' (1298 aa).

Positions 60, 62, 75, and 78 each coordinate Zn(2+). Positions 535, 537, and 539 each coordinate Mg(2+). Zn(2+) contacts are provided by Cys877, Cys954, Cys961, and Cys964.

This sequence belongs to the RNA polymerase beta' chain family. As to quaternary structure, the RNAP catalytic core consists of 2 alpha, 1 beta, 1 beta' and 1 omega subunit. When a sigma factor is associated with the core the holoenzyme is formed, which can initiate transcription. Mg(2+) serves as cofactor. The cofactor is Zn(2+).

It carries out the reaction RNA(n) + a ribonucleoside 5'-triphosphate = RNA(n+1) + diphosphate. In terms of biological role, DNA-dependent RNA polymerase catalyzes the transcription of DNA into RNA using the four ribonucleoside triphosphates as substrates. The protein is DNA-directed RNA polymerase subunit beta' of Micrococcus luteus (strain ATCC 4698 / DSM 20030 / JCM 1464 / CCM 169 / CCUG 5858 / IAM 1056 / NBRC 3333 / NCIMB 9278 / NCTC 2665 / VKM Ac-2230) (Micrococcus lysodeikticus).